We begin with the raw amino-acid sequence, 108 residues long: Protein YcgL (108 aa).

A YcgL domain is found at 12 to 96; that stretch reads MFCVIYRSSK…SPEDLLKQHL (85 aa).

This Shigella dysenteriae serotype 1 (strain Sd197) protein is Protein YcgL.